A 187-amino-acid chain; its full sequence is 5-formyltetrahydrofolate cyclo-ligase (187 aa).

Residues 6–10 (RQQIR), 139–146 (GMGGGFYD), and D178 contribute to the ATP site.

The protein belongs to the 5-formyltetrahydrofolate cyclo-ligase family.

It catalyses the reaction (6S)-5-formyl-5,6,7,8-tetrahydrofolate + ATP = (6R)-5,10-methenyltetrahydrofolate + ADP + phosphate. It functions in the pathway one-carbon metabolism; tetrahydrofolate interconversion. Its function is as follows. Involved in the removal of 5-formyltetrahydrofolate. In vitro, it is a potent inhibitor of various folate-dependent enzymes in the C1 metabolism network and in vivo it might function as a folate storage. 5-formyltetrahydrofolate is also used as an antifolate rescue agent in cancer chemotherapy. Catalyzes the irreversible ATP-dependent transformation of 5-formyltetrahydrofolate (5-CHO-THF) to form 5,10-methenyltetrahydrofolate (5,10-CH=THF). The reverse reaction is catalyzed by the serine hydroxymethyltransferase GlyA (SHMT). The polypeptide is 5-formyltetrahydrofolate cyclo-ligase (Haemophilus influenzae (strain ATCC 51907 / DSM 11121 / KW20 / Rd)).